Consider the following 482-residue polypeptide: Early growth response protein 4 (482 aa).

Positions 274–357 (DLGEGAESLP…PPAKARRKGR (84 aa)) are disordered. Low complexity predominate over residues 280–290 (ESLPGLLTPPS). A compositionally biased stretch (gly residues) spans 291-302 (GEGGSSGEGGEF). Positions 337-349 (PEPPVPPPAPFPP) are enriched in pro residues. 3 C2H2-type zinc fingers span residues 376 to 400 (FACP…LRIH), 406 to 428 (FQCR…VRTH), and 434 to 456 (FACD…SKVH).

The protein belongs to the EGR C2H2-type zinc-finger protein family. In terms of tissue distribution, expressed in brain. In the cerebellum and frontal cortex.

It is found in the nucleus. Transcriptional regulator. Recognizes and binds to the DNA sequence 5'-GCGGGGGCG-3' (GSG). Activates the transcription of target genes whose products are required for mitogenesis and differentiation. In Bos taurus (Bovine), this protein is Early growth response protein 4 (EGR4).